We begin with the raw amino-acid sequence, 161 residues long: Endoribonuclease YbeY (161 aa).

Positions 121, 125, and 131 each coordinate Zn(2+).

This sequence belongs to the endoribonuclease YbeY family. The cofactor is Zn(2+).

The protein localises to the cytoplasm. Functionally, single strand-specific metallo-endoribonuclease involved in late-stage 70S ribosome quality control and in maturation of the 3' terminus of the 16S rRNA. The sequence is that of Endoribonuclease YbeY from Xanthomonas oryzae pv. oryzae (strain MAFF 311018).